Here is a 96-residue protein sequence, read N- to C-terminus: Cytochrome c2 iso-2 (96 aa).

Heme c is bound by residues C10, C13, H14, and M75.

It belongs to the cytochrome c family. In terms of processing, binds 1 heme c group covalently per subunit.

Its function is as follows. Cytochrome c2 is found mainly in purple, non-sulfur, photosynthetic bacteria where it functions as the electron donor to the oxidized bacteriochlorophyll in the photophosphorylation pathway. However, it may also have a role in the respiratory chain and is found in some non-photosynthetic bacteria. In Magnetospirillum fulvum (Rhodospirillum fulvum), this protein is Cytochrome c2 iso-2.